The chain runs to 446 residues: Probable E3 ubiquitin-protein ligase XBOS31 (446 aa).

5 ANK repeats span residues 46–75 (DRFTALHIAAANGRLQVLSMLLDRDGDVDV), 79–108 (KKQTPLMVAAMRGNTECVVRLLRGGANVLT), 113–142 (RARTCLHHAAYYGHAECLQAILGAAAQAQG), 160–189 (RGATPLHLAARHARASCVRLLLDKGAIVSA), and 197–227 (PGSTALHLAARAGSMECIRELLAWGADRLQR). The segment at 317–366 (CNICFEQACSMEVKECGHQMCAACTLAICCHSKPNPKTLLLHPPACPFCR) adopts an RING-type zinc-finger fold. The disordered stretch occupies residues 376 to 401 (TTNSNKTNSRRRSRSRSSSFKGGLSS).

It catalyses the reaction S-ubiquitinyl-[E2 ubiquitin-conjugating enzyme]-L-cysteine + [acceptor protein]-L-lysine = [E2 ubiquitin-conjugating enzyme]-L-cysteine + N(6)-ubiquitinyl-[acceptor protein]-L-lysine.. It functions in the pathway protein modification; protein ubiquitination. The chain is Probable E3 ubiquitin-protein ligase XBOS31 (XBOS31) from Oryza sativa subsp. japonica (Rice).